The chain runs to 165 residues: Large ribosomal subunit protein uL10 (165 aa).

Residues K37 and K105 each carry the N6-acetyllysine modification.

This sequence belongs to the universal ribosomal protein uL10 family. In terms of assembly, part of the ribosomal stalk of the 50S ribosomal subunit. The N-terminus interacts with L11 and the large rRNA to form the base of the stalk. The C-terminus forms an elongated spine to which L12 dimers bind in a sequential fashion forming a multimeric L10(L12)X complex.

Functionally, protein L10 is also a translational repressor protein. It controls the translation of the rplJL-rpoBC operon by binding to its mRNA. In terms of biological role, forms part of the ribosomal stalk, playing a central role in the interaction of the ribosome with GTP-bound translation factors. In Escherichia coli O6:H1 (strain CFT073 / ATCC 700928 / UPEC), this protein is Large ribosomal subunit protein uL10 (rplJ).